We begin with the raw amino-acid sequence, 311 residues long: MNMKTIEWKDGELVLIDQRKLPDSLEYFRCRDYRDVIYAIKNMVVRGAPAIGVTAAFGVAMAELAGEDVEVAAEEIKASRPTAVNLFWAVDRVMKSESPLDEAITMYMEDMETNRAIGRHGAGLIEDGDTVLTHCNAGALACVDYGTALGVIRAAWDDGKRLTVICDETRPVGQGARLSVWEMQQEGIPVKLITDVAAGYLMQTGMIDKVIIGADRIAEGGVANKIGSLMVALAAKRFNVPFYVAAPMSTFDTENSIYDIEIEERDPAEVLYYGGCRIAPQDTEAINPAFDIVPSDLISGIITEKGILDPL.

Residues 46–48 (RGA), R80, and Q174 each bind substrate. D215 acts as the Proton donor in catalysis. Substrate is bound at residue 224-225 (NK).

It belongs to the eIF-2B alpha/beta/delta subunits family. MtnA subfamily.

It carries out the reaction 5-(methylsulfanyl)-alpha-D-ribose 1-phosphate = 5-(methylsulfanyl)-D-ribulose 1-phosphate. Catalyzes the interconversion of methylthioribose-1-phosphate (MTR-1-P) into methylthioribulose-1-phosphate (MTRu-1-P). This chain is Putative methylthioribose-1-phosphate isomerase, found in Methanothermobacter thermautotrophicus (strain ATCC 29096 / DSM 1053 / JCM 10044 / NBRC 100330 / Delta H) (Methanobacterium thermoautotrophicum).